The primary structure comprises 457 residues: Succinate-semialdehyde dehydrogenase [NADP(+)] (457 aa).

Residues W133 to N134, K157 to S160, and G209 to S210 each bind NADP(+). E231 serves as the catalytic Proton acceptor. An NADP(+)-binding site is contributed by L232. C265 functions as the Nucleophile in the catalytic mechanism. NADP(+) is bound at residue E362.

Belongs to the aldehyde dehydrogenase family.

The catalysed reaction is succinate semialdehyde + NADP(+) + H2O = succinate + NADPH + 2 H(+). Its function is as follows. Catalyzes the NADP(+)-dependent oxidation of succinate semialdehyde to succinate. It is believed to be the main source of succinate semialdehyde dehydrogenase activity in Mycobacterium. The sequence is that of Succinate-semialdehyde dehydrogenase [NADP(+)] (gabD1) from Mycobacterium leprae (strain TN).